The sequence spans 91 residues: Molybdopterin synthase sulfur carrier subunit (91 aa).

Position 91 is a 1-thioglycine; alternate (glycine 91). A Glycyl adenylate; alternate modification is found at glycine 91.

The protein belongs to the MoaD family. MOCS2A subfamily. As to quaternary structure, heterotetramer; composed of 2 small (MOCS2A) and 2 large (MOCS2B) subunits. In terms of processing, C-terminal thiocarboxylation occurs in 2 steps, it is first acyl-adenylated (-COAMP) via the hesA/moeB/thiF part of MOCS3, then thiocarboxylated (-COSH) via the rhodanese domain of MOCS3.

The protein localises to the cytoplasm. The protein operates within cofactor biosynthesis; molybdopterin biosynthesis. Its function is as follows. Acts as a sulfur carrier required for molybdopterin biosynthesis. Component of the molybdopterin synthase complex that catalyzes the conversion of precursor Z into molybdopterin by mediating the incorporation of 2 sulfur atoms into precursor Z to generate a dithiolene group. In the complex, serves as sulfur donor by being thiocarboxylated (-COSH) at its C-terminus by MOCS3. After interaction with MOCS2B, the sulfur is then transferred to precursor Z to form molybdopterin. The protein is Molybdopterin synthase sulfur carrier subunit of Anopheles gambiae (African malaria mosquito).